The chain runs to 530 residues: ATP-dependent 6-phosphofructokinase 4, chloroplastic (530 aa).

The transit peptide at 1-54 (MEASISFLGSTKPNISLFNPSSNVLPRRDFPLPALKLKKVSVLPRILHQKRLIR) directs the protein to the chloroplast. Serine 121 is subject to Phosphoserine. ATP-binding positions include glycine 152, 215–216 (RG), and 240–243 (GGGT). Residues 269–271 (TID), 314–316 (MGR), glutamate 370, and 427–430 (YMIR) each bind substrate. Catalysis depends on aspartate 271, which acts as the Proton acceptor.

It belongs to the phosphofructokinase type A (PFKA) family. PPi-dependent PFK group II subfamily. Atypical ATP-dependent clade 'X' sub-subfamily. In terms of assembly, homotetramer. The cofactor is Mg(2+). In terms of tissue distribution, expressed in leaves, stems and flowers.

It is found in the plastid. The protein localises to the chloroplast. The catalysed reaction is beta-D-fructose 6-phosphate + ATP = beta-D-fructose 1,6-bisphosphate + ADP + H(+). The protein operates within carbohydrate degradation; glycolysis; D-glyceraldehyde 3-phosphate and glycerone phosphate from D-glucose: step 3/4. With respect to regulation, allosterically activated by AMP. Its function is as follows. Catalyzes the phosphorylation of D-fructose 6-phosphate to fructose 1,6-bisphosphate by ATP, the first committing step of glycolysis. This is ATP-dependent 6-phosphofructokinase 4, chloroplastic from Arabidopsis thaliana (Mouse-ear cress).